Here is a 118-residue protein sequence, read N- to C-terminus: Large ribosomal subunit protein bL20 (118 aa).

It belongs to the bacterial ribosomal protein bL20 family.

Binds directly to 23S ribosomal RNA and is necessary for the in vitro assembly process of the 50S ribosomal subunit. It is not involved in the protein synthesizing functions of that subunit. This Shigella dysenteriae serotype 1 (strain Sd197) protein is Large ribosomal subunit protein bL20.